The sequence spans 202 residues: Ras-related protein ORAB-1 (202 aa).

GTP-binding positions include 15–23 (GDSGVGKSC), 33–40 (YTESYIST), 63–67 (DTAGQ), 121–124 (NKCD), and 151–153 (SAK). Residues 37–45 (YISTIGVDF) carry the Effector region motif. The segment at 173–202 (MGPGATSGGSEKSNVNIQSTPVKSSGGGCC) is disordered. A compositionally biased stretch (polar residues) spans 180 to 195 (GGSEKSNVNIQSTPVK). S-geranylgeranyl cysteine attachment occurs at residues C201 and C202.

It belongs to the small GTPase superfamily. Rab family.

The protein localises to the cell membrane. In terms of biological role, protein transport. Probably involved in vesicular traffic. In Diplobatis ommata (Ocellated electric ray), this protein is Ras-related protein ORAB-1.